The sequence spans 784 residues: Ent-kaurene synthase 1, chloroplastic (784 aa).

Residues 1–28 (MNLSLCIASPLLTKSSRPTALSAIHTAS) constitute a chloroplast transit peptide. Mg(2+) contacts are provided by Asp528, Asp532, Asn672, and Glu680. Residues 528–532 (DDFFD) carry the DDXXD motif motif.

It belongs to the terpene synthase family. It depends on Mg(2+) as a cofactor. As to expression, accumulates in leaves.

The protein localises to the plastid. The protein resides in the chloroplast. It carries out the reaction ent-copalyl diphosphate = ent-kaur-16-ene + diphosphate. Its pathway is secondary metabolite biosynthesis; terpenoid biosynthesis. The protein operates within plant hormone biosynthesis; gibberellin biosynthesis. Involved in the biosynthesis of ent-kaurene diterpenoids natural products such as oridonin, miltiradiene, eriocalyxin B and nezukol, known to exhibit antitumor, anti-inflammatory and antibacterial activities, and in the production of gibberellins phytohormones. Catalyzes the conversion of ent-copalyl diphosphate (ent-CPP) to ent-kaurene. The chain is Ent-kaurene synthase 1, chloroplastic from Stevia rebaudiana (Stevia).